Consider the following 1030-residue polypeptide: Beta-galactosidase (1030 aa).

Residues Asn-99 and Asp-197 each coordinate substrate. Asp-197 contacts Na(+). Mg(2+)-binding residues include Glu-411, His-413, and Glu-456. Substrate is bound by residues Glu-456 and 532–535 (EYAH). Glu-456 functions as the Proton donor in the catalytic mechanism. Glu-532 functions as the Nucleophile in the catalytic mechanism. Asn-592 lines the Mg(2+) pocket. Residues Phe-596 and Asn-599 each contribute to the Na(+) site. Residues Asn-599 and Trp-1004 each contribute to the substrate site.

It belongs to the glycosyl hydrolase 2 family. As to quaternary structure, homotetramer. It depends on Mg(2+) as a cofactor. The cofactor is Na(+).

It catalyses the reaction Hydrolysis of terminal non-reducing beta-D-galactose residues in beta-D-galactosides.. This chain is Beta-galactosidase, found in Photobacterium profundum (strain SS9).